We begin with the raw amino-acid sequence, 307 residues long: Glycerol-3-phosphate dehydrogenase [NAD(P)+] (307 aa).

Residues Trp-14, Arg-34, Arg-35, and Lys-82 each contribute to the NADPH site. Residues Lys-82 and Gly-110 each contribute to the sn-glycerol 3-phosphate site. NADPH is bound at residue Ser-114. Sn-glycerol 3-phosphate is bound by residues Lys-165, Asp-218, Ser-228, Arg-229, and Asn-230. The active-site Proton acceptor is Lys-165. Position 229 (Arg-229) interacts with NADPH. Residue Glu-255 participates in NADPH binding.

Belongs to the NAD-dependent glycerol-3-phosphate dehydrogenase family.

The protein localises to the cytoplasm. The catalysed reaction is sn-glycerol 3-phosphate + NAD(+) = dihydroxyacetone phosphate + NADH + H(+). It catalyses the reaction sn-glycerol 3-phosphate + NADP(+) = dihydroxyacetone phosphate + NADPH + H(+). The protein operates within membrane lipid metabolism; glycerophospholipid metabolism. In terms of biological role, catalyzes the reduction of the glycolytic intermediate dihydroxyacetone phosphate (DHAP) to sn-glycerol 3-phosphate (G3P), the key precursor for phospholipid synthesis. The protein is Glycerol-3-phosphate dehydrogenase [NAD(P)+] of Trichormus variabilis (strain ATCC 29413 / PCC 7937) (Anabaena variabilis).